Here is a 283-residue protein sequence, read N- to C-terminus: Formamidopyrimidine-DNA glycosylase (283 aa).

Pro-2 serves as the catalytic Schiff-base intermediate with DNA. Glu-3 (proton donor) is an active-site residue. The active-site Proton donor; for beta-elimination activity is Lys-61. DNA is bound by residues His-94, Arg-113, and Lys-159. Residues 245–279 (DAYGREGESCRRCGAVMRREKFMNRSSFYCPKCQP) form an FPG-type zinc finger. Arg-269 serves as the catalytic Proton donor; for delta-elimination activity.

The protein belongs to the FPG family. In terms of assembly, monomer. Zn(2+) is required as a cofactor.

It carries out the reaction Hydrolysis of DNA containing ring-opened 7-methylguanine residues, releasing 2,6-diamino-4-hydroxy-5-(N-methyl)formamidopyrimidine.. It catalyses the reaction 2'-deoxyribonucleotide-(2'-deoxyribose 5'-phosphate)-2'-deoxyribonucleotide-DNA = a 3'-end 2'-deoxyribonucleotide-(2,3-dehydro-2,3-deoxyribose 5'-phosphate)-DNA + a 5'-end 5'-phospho-2'-deoxyribonucleoside-DNA + H(+). Functionally, involved in base excision repair of DNA damaged by oxidation or by mutagenic agents. Acts as a DNA glycosylase that recognizes and removes damaged bases. Has a preference for oxidized purines, such as 7,8-dihydro-8-oxoguanine (8-oxoG). Has AP (apurinic/apyrimidinic) lyase activity and introduces nicks in the DNA strand. Cleaves the DNA backbone by beta-delta elimination to generate a single-strand break at the site of the removed base with both 3'- and 5'-phosphates. The polypeptide is Formamidopyrimidine-DNA glycosylase (Mycobacterium avium (strain 104)).